The sequence spans 438 residues: UPF0229 protein Smed_1028 (438 aa).

The segment at 55 to 107 is disordered; the sequence is PARGVNEPAFQPDSNSGERRHVLPGNREFAAGDRIPKRGGGGGAGNAGAGTGQ. Over residues 92 to 105 the composition is skewed to gly residues; that stretch reads RGGGGGAGNAGAGT.

Belongs to the UPF0229 family.

This is UPF0229 protein Smed_1028 from Sinorhizobium medicae (strain WSM419) (Ensifer medicae).